A 717-amino-acid polypeptide reads, in one-letter code: Polyribonucleotide nucleotidyltransferase (717 aa).

D495 and D501 together coordinate Mg(2+). Residues 562–624 (PRMIMIQIPK…TALDSALSQI (63 aa)) enclose the KH domain. The S1 motif domain occupies 634-703 (GEVYEGKVKS…KTGKYRLSRK (70 aa)).

It belongs to the polyribonucleotide nucleotidyltransferase family. Requires Mg(2+) as cofactor.

It is found in the cytoplasm. It carries out the reaction RNA(n+1) + phosphate = RNA(n) + a ribonucleoside 5'-diphosphate. In terms of biological role, involved in mRNA degradation. Catalyzes the phosphorolysis of single-stranded polyribonucleotides processively in the 3'- to 5'-direction. This is Polyribonucleotide nucleotidyltransferase from Cytophaga hutchinsonii (strain ATCC 33406 / DSM 1761 / CIP 103989 / NBRC 15051 / NCIMB 9469 / D465).